Reading from the N-terminus, the 647-residue chain is Carboxypeptidase Z (647 aa).

The first 18 residues, 1 to 18, serve as a signal peptide directing secretion; that stretch reads MVPSLLLLLTGLFRATEP. One can recognise an FZ domain in the interval 35–157; the sequence is AQKAKCVDIS…AGEEEGCFDP (123 aa). Cystine bridges form between Cys40-Cys106, Cys48-Cys99, Cys90-Cys126, Cys115-Cys154, and Cys119-Cys143. The Peptidase M14 domain maps to 183–499; it reads KHHSYSQMVS…DALLNYMEMV (317 aa). 2 residues coordinate Zn(2+): His245 and Glu248. The N-linked (GlcNAc...) asparagine glycan is linked to Asn278. Position 377 (His377) interacts with Zn(2+). The Proton donor/acceptor role is filled by Glu469.

This sequence belongs to the peptidase M14 family. Interacts with WNT4 vie its FZ domain. Zn(2+) serves as cofactor. In the early embryo it is initially expressed throughout the somites and subsequently becomes restricted to the sclerotome. Expressed in somites, paraxial head mesoderm and apical ectodermal ridge.

It is found in the secreted. It localises to the extracellular space. Its subcellular location is the extracellular matrix. Its activity is regulated as follows. Inhibited by 2-mercaptomethyl-3-guanidinoethylthiopropanoic acid (MGTA) and guanidinoethylmercaptosuccinic acid (GEMSA). Inhibited by chelating agents such as EDTA and EGTA. Cleaves substrates with C-terminal arginine residues. Modulates the Wnt signaling pathway, probably by cleaving some undefined protein. Regulates the development of skeletal elements during development, probably by activating WNT4. The chain is Carboxypeptidase Z (CPZ) from Gallus gallus (Chicken).